The primary structure comprises 203 residues: Putative 3-methyladenine DNA glycosylase (203 aa).

Belongs to the DNA glycosylase MPG family.

The chain is Putative 3-methyladenine DNA glycosylase from Clostridium botulinum (strain Loch Maree / Type A3).